We begin with the raw amino-acid sequence, 582 residues long: MVIPRYHLIPTNCILSYHIKMSYLTDILKLFSLETLDTRLYPSSNTAKKQSIIKQANPKSRWSTIEFKFYYLVFLIIVPLMFKAGMESANENNPNYPKYEHLLSNGWIFGRKVDNSDQQYRFFRNNFPLLCLLIIIHVGLRRVINRIIPLSSKRTYFDFIFGIIFLIGAHGVNVLKLSIHLLINYLIGKYIKNYKLSLWITWIYGISSLFFNEWYGNYTLGLSFLSTGYTGIIPRWDVFYNFTLLRMISFNFDYLERQQKLNNMTLPKEESNGSLLNLDDRERLTAPLPIEDYNIFNYISYLTYTPLFIAGPILTFNDYIYQSNYQQSSSTKDYHRIMMYLIRFIFCLLTLEFILHFMYVVAASKTKSWEGNLPFQISMLGMFNLNIIWLKLLIPWRLFRLWSLLDGIDPPENMIRCMDNNFSALAFWRAWHRSYNRWIIRYIYLPMGGGGKYRILNSLLVFSFVAIWHDIELKLLMWGWLVVLFLIPEISVTMIFKKYRNQWWYRHLCGVGAVINIWMMMIANLVGFCLGTDGMWKLLHDLFKTFDGVRFLIISSGALFVGAQIMFEIRESEMRKGINVRC.

At 1-61 (MVIPRYHLIP…IIKQANPKSR (61 aa)) the chain is on the extracellular side. Residues 62–82 (WSTIEFKFYYLVFLIIVPLMF) form a helical membrane-spanning segment. Residues 83 to 121 (KAGMESANENNPNYPKYEHLLSNGWIFGRKVDNSDQQYR) are Cytoplasmic-facing. The chain crosses the membrane as a helical span at residues 122–144 (FFRNNFPLLCLLIIIHVGLRRVI). At 145–158 (NRIIPLSSKRTYFD) the chain is on the extracellular side. The chain crosses the membrane as a helical span at residues 159–179 (FIFGIIFLIGAHGVNVLKLSI). Topologically, residues 180–195 (HLLINYLIGKYIKNYK) are cytoplasmic. Residues 196 to 216 (LSLWITWIYGISSLFFNEWYG) form a helical membrane-spanning segment. Residues 217-294 (NYTLGLSFLS…TAPLPIEDYN (78 aa)) are Extracellular-facing. Residues 295–315 (IFNYISYLTYTPLFIAGPILT) form a helical membrane-spanning segment. The Cytoplasmic portion of the chain corresponds to 316–343 (FNDYIYQSNYQQSSSTKDYHRIMMYLIR). A helical transmembrane segment spans residues 344 to 364 (FIFCLLTLEFILHFMYVVAAS). Residues 365-373 (KTKSWEGNL) are Extracellular-facing. The helical transmembrane segment at 374 to 394 (PFQISMLGMFNLNIIWLKLLI) threads the bilayer. Residues 395–454 (PWRLFRLWSLLDGIDPPENMIRCMDNNFSALAFWRAWHRSYNRWIIRYIYLPMGGGGKYR) lie on the Cytoplasmic side of the membrane. 2 consecutive transmembrane segments (helical) span residues 455 to 475 (ILNS…ELKL) and 476 to 496 (LMWG…TMIF). Residue histidine 469 is part of the active site. Over 497 to 507 (KKYRNQWWYRH) the chain is Cytoplasmic. The helical transmembrane segment at 508–528 (LCGVGAVINIWMMMIANLVGF) threads the bilayer. The Extracellular portion of the chain corresponds to 529 to 548 (CLGTDGMWKLLHDLFKTFDG). The chain crosses the membrane as a helical span at residues 549-569 (VRFLIISSGALFVGAQIMFEI). At 570-582 (RESEMRKGINVRC) the chain is on the cytoplasmic side.

It belongs to the membrane-bound acyltransferase family.

The protein localises to the cell membrane. It localises to the endoplasmic reticulum membrane. The protein resides in the mitochondrion membrane. Its function is as follows. Membrane-bound O-acyltransferase involved in the remodeling of glycosylphosphatidylinositol (GPI) anchors. Acts only on GPI-anchored proteins, but not on free GPI lipids. Also involved in lipid metabolism, having profound effects on sphingolipid-sterol-ordered domains integrity and assembly. Involved in cell integrity and apoptosis. This Candida tropicalis (Yeast) protein is Membrane-bound O-acyltransferase GUP1 (GUP1).